Reading from the N-terminus, the 472-residue chain is Aspartyl/glutamyl-tRNA(Asn/Gln) amidotransferase subunit B (472 aa).

Belongs to the GatB/GatE family. GatB subfamily. Heterotrimer of A, B and C subunits.

The enzyme catalyses L-glutamyl-tRNA(Gln) + L-glutamine + ATP + H2O = L-glutaminyl-tRNA(Gln) + L-glutamate + ADP + phosphate + H(+). The catalysed reaction is L-aspartyl-tRNA(Asn) + L-glutamine + ATP + H2O = L-asparaginyl-tRNA(Asn) + L-glutamate + ADP + phosphate + 2 H(+). Functionally, allows the formation of correctly charged Asn-tRNA(Asn) or Gln-tRNA(Gln) through the transamidation of misacylated Asp-tRNA(Asn) or Glu-tRNA(Gln) in organisms which lack either or both of asparaginyl-tRNA or glutaminyl-tRNA synthetases. The reaction takes place in the presence of glutamine and ATP through an activated phospho-Asp-tRNA(Asn) or phospho-Glu-tRNA(Gln). This is Aspartyl/glutamyl-tRNA(Asn/Gln) amidotransferase subunit B from Mycoplasmopsis agalactiae (strain NCTC 10123 / CIP 59.7 / PG2) (Mycoplasma agalactiae).